Reading from the N-terminus, the 962-residue chain is Synphilin-1 (962 aa).

3 disordered regions span residues Ser-80–Asn-99, Tyr-104–Gln-137, and Thr-222–Glu-249. ANK repeat units lie at residues Asn-348–Glu-379, Glu-383–Glu-412, Asp-418–Ile-447, and Glu-455–Met-484. The stretch at Val-522–Ala-548 forms a coiled coil. The segment at Ala-548–Ala-590 is disordered. The span at Lys-554–Ser-571 shows a compositional bias: low complexity. The stretch at Val-602–Val-631 is one ANK 5 repeat. A compositionally biased stretch (low complexity) spans Arg-667–Ser-684. The disordered stretch occupies residues Arg-667 to Met-852. A compositionally biased stretch (basic and acidic residues) spans Glu-685 to Arg-699. One copy of the ANK 6 repeat lies at Pro-698 to Gly-728. A compositionally biased stretch (polar residues) spans Pro-772–Ala-790. Basic and acidic residues predominate over residues Asn-831–Arg-840.

In terms of assembly, associates with SNCA, RNF19A and PRKN. Ubiquitinated; mediated by SIAH1 or RNF19A and leading to its subsequent proteasomal degradation.

The polypeptide is Synphilin-1 (Sncaip) (Mus musculus (Mouse)).